A 205-amino-acid polypeptide reads, in one-letter code: Cytochrome c oxidase subunit 3 (205 aa).

Transmembrane regions (helical) follow at residues 29 to 49 (TIVF…MYFV), 72 to 92 (ALLI…GVFA), 104 to 124 (WFLV…YEYI), 142 to 162 (FFIT…AFVV), and 184 to 204 (SYYW…IYFI).

In terms of assembly, associates with subunits I, II and IV to form cytochrome c oxidase. The 4 subunit cytochrome c oxidase forms a supercomplex with the menaquinol-cytochrome c reductase complex (cytochrome bc1).

It localises to the cell membrane. The enzyme catalyses 4 Fe(II)-[cytochrome c] + O2 + 8 H(+)(in) = 4 Fe(III)-[cytochrome c] + 2 H2O + 4 H(+)(out). The chain is Cytochrome c oxidase subunit 3 (ctaE) from Corynebacterium glutamicum (strain ATCC 13032 / DSM 20300 / JCM 1318 / BCRC 11384 / CCUG 27702 / LMG 3730 / NBRC 12168 / NCIMB 10025 / NRRL B-2784 / 534).